The sequence spans 557 residues: Mercuric reductase (557 aa).

In terms of domain architecture, HMA spans 1-65 (MILLSIEGMT…AIEALGYIAK (65 aa)). Positions 11 and 14 each coordinate a metal cation. Positions 106 and 126 each coordinate FAD. Residues C133 and C138 are joined by a disulfide bond. K142, A207, D399, and V407 together coordinate FAD. C554 and C555 together coordinate Hg(2+).

This sequence belongs to the class-I pyridine nucleotide-disulfide oxidoreductase family. In terms of assembly, homodimer. It depends on FAD as a cofactor.

It catalyses the reaction Hg + NADP(+) + H(+) = Hg(2+) + NADPH. Resistance to Hg(2+) in bacteria appears to be governed by a specialized system which includes mercuric reductase. MerA protein is responsible for volatilizing mercury as Hg(0). The chain is Mercuric reductase (merA) from Shewanella putrefaciens (Pseudomonas putrefaciens).